Here is a 188-residue protein sequence, read N- to C-terminus: HTH-type transcriptional repressor AcnR (188 aa).

Positions 10-70 (TNSRQEILEG…ALAREDAARM (61 aa)) constitute an HTH tetR-type domain. A DNA-binding region (H-T-H motif) is located at residues 33-52 (TVRRLEEATGKSRGAIFHHF). Residues 79 to 80 (LV), Arg130, and Asn134 each bind citrate. Mg(2+) is bound at residue Glu181. Arg185 is a citrate binding site.

In terms of assembly, homodimer.

In terms of biological role, acnR negatively controls the expression of the aconitase gene acn. Binds to the imperfect inverted repeat in the acn promoter region. In Corynebacterium glutamicum (strain ATCC 13032 / DSM 20300 / JCM 1318 / BCRC 11384 / CCUG 27702 / LMG 3730 / NBRC 12168 / NCIMB 10025 / NRRL B-2784 / 534), this protein is HTH-type transcriptional repressor AcnR.